A 180-amino-acid polypeptide reads, in one-letter code: ATP synthase subunit b, plastid (180 aa).

Residues 27-49 (LVTTLINIAVVLSLLIVFGKGFL) traverse the membrane as a helical segment.

Belongs to the ATPase B chain family. As to quaternary structure, F-type ATPases have 2 components, F(1) - the catalytic core - and F(0) - the membrane proton channel. F(1) has five subunits: alpha(3), beta(3), gamma(1), delta(1), epsilon(1). F(0) has four main subunits: a(1), b(1), b'(1) and c(10-14). The alpha and beta chains form an alternating ring which encloses part of the gamma chain. F(1) is attached to F(0) by a central stalk formed by the gamma and epsilon chains, while a peripheral stalk is formed by the delta, b and b' chains.

Its subcellular location is the plastid membrane. Its function is as follows. F(1)F(0) ATP synthase produces ATP from ADP in the presence of a proton or sodium gradient. F-type ATPases consist of two structural domains, F(1) containing the extramembraneous catalytic core and F(0) containing the membrane proton channel, linked together by a central stalk and a peripheral stalk. During catalysis, ATP synthesis in the catalytic domain of F(1) is coupled via a rotary mechanism of the central stalk subunits to proton translocation. In terms of biological role, component of the F(0) channel, it forms part of the peripheral stalk, linking F(1) to F(0). This Cuscuta gronovii (Common dodder) protein is ATP synthase subunit b, plastid.